Here is a 448-residue protein sequence, read N- to C-terminus: Dual specificity mitogen-activated protein kinase kinase 5 (448 aa).

The segment at 18–25 (VIRIKIPN) is interaction with MAPK7. In terms of domain architecture, PB1 spans 18–109 (VIRIKIPNSG…EPLQIFPRAC (92 aa)). Positions 64–68 (DEDGD) are interaction with MAP3K2/MAP3K3. The interval 116 to 144 (NIHGLKVNTRAGPSQHSSPAVSDSLPSNS) is disordered. Positions 117–131 (IHGLKVNTRAGPSQH) are interaction with MAPK7. The segment covering 126-144 (AGPSQHSSPAVSDSLPSNS) has biased composition (polar residues). The Protein kinase domain occupies 166–409 (IRYRDTLGHG…MRKQPKERPA (244 aa)). ATP contacts are provided by residues 172 to 180 (LGHGNGGTV) and K195. The Proton acceptor role is filled by D283. Residue S311 is modified to Phosphoserine. At T315 the chain carries Phosphothreonine.

The protein belongs to the protein kinase superfamily. STE Ser/Thr protein kinase family. MAP kinase kinase subfamily. In terms of assembly, interacts with PARD6A, MAP3K3 and MAPK7. Forms a complex with SQSTM1 and PRKCZ or PRKCI. As to quaternary structure, (Microbial infection) Interacts with Yersinia YopJ. The cofactor is Mg(2+). Post-translationally, activated by phosphorylation on Ser/Thr by MAP kinase kinase kinases. In terms of processing, (Microbial infection) Yersinia YopJ may acetylate Ser/Thr residues, preventing phosphorylation and activation, thus blocking the MAPK signaling pathway. In terms of tissue distribution, expressed in many adult tissues. Abundant in heart and skeletal muscle.

The catalysed reaction is L-seryl-[protein] + ATP = O-phospho-L-seryl-[protein] + ADP + H(+). It catalyses the reaction L-threonyl-[protein] + ATP = O-phospho-L-threonyl-[protein] + ADP + H(+). It carries out the reaction L-tyrosyl-[protein] + ATP = O-phospho-L-tyrosyl-[protein] + ADP + H(+). In terms of biological role, acts as a scaffold for the formation of a ternary MAP3K2/MAP3K3-MAP3K5-MAPK7 signaling complex. Activation of this pathway appears to play a critical role in protecting cells from stress-induced apoptosis, neuronal survival and cardiac development and angiogenesis. As part of the MAPK/ERK signaling pathway, acts as a negative regulator of apoptosis in cardiomyocytes via promotion of STUB1/CHIP-mediated ubiquitination and degradation of ICER-type isoforms of CREM. This is Dual specificity mitogen-activated protein kinase kinase 5 (MAP2K5) from Homo sapiens (Human).